The primary structure comprises 300 residues: uncharacterized protein (300 aa).

The a divalent metal cation site is built by E146, E148, and D177.

Belongs to the FAH family.

This is an uncharacterized protein from Staphylococcus aureus (strain MW2).